Reading from the N-terminus, the 215-residue chain is HTH-type transcriptional repressor FabR (215 aa).

One can recognise an HTH tetR-type domain in the interval lysine 10 to leucine 70. The segment at residues serine 33–phenylalanine 52 is a DNA-binding region (H-T-H motif).

As to quaternary structure, homodimer.

It localises to the cytoplasm. Represses the transcription of fabB, involved in unsaturated fatty acid (UFA) biosynthesis. By controlling UFA production, FabR directly influences the physical properties of the membrane bilayer. This Escherichia coli O1:K1 / APEC protein is HTH-type transcriptional repressor FabR.